We begin with the raw amino-acid sequence, 89 residues long: Small ribosomal subunit protein uS15 (89 aa).

Belongs to the universal ribosomal protein uS15 family. As to quaternary structure, part of the 30S ribosomal subunit. Forms a bridge to the 50S subunit in the 70S ribosome, contacting the 23S rRNA.

Its function is as follows. One of the primary rRNA binding proteins, it binds directly to 16S rRNA where it helps nucleate assembly of the platform of the 30S subunit by binding and bridging several RNA helices of the 16S rRNA. Functionally, forms an intersubunit bridge (bridge B4) with the 23S rRNA of the 50S subunit in the ribosome. This chain is Small ribosomal subunit protein uS15, found in Carboxydothermus hydrogenoformans (strain ATCC BAA-161 / DSM 6008 / Z-2901).